The chain runs to 42 residues: Delta-hexatoxin-Hv1b (42 aa).

Intrachain disulfides connect Cys1/Cys15, Cys8/Cys20, Cys14/Cys31, and Cys16/Cys42.

Belongs to the neurotoxin 06 (delta-actx) family. In terms of tissue distribution, expressed by the venom gland.

It is found in the secreted. Lethal neurotoxin. Slows the inactivation of tetrodotoxin-sensitive voltage-gated sodium channels (Nav) by binding to site 3 of the channel, resulting in repetitive firing in autonomic and motor nerve fibers. This Hadronyche versuta (Blue mountains funnel-web spider) protein is Delta-hexatoxin-Hv1b.